Consider the following 314-residue polypeptide: Cell division protein FtsQ (314 aa).

Composition is skewed to basic and acidic residues over residues 1–15 and 30–57; these read MTEHNEDPQIERVAD and ESKDEPAEHPEFEGPRRRARRERAERRA. The interval 1-57 is disordered; the sequence is MTEHNEDPQIERVADDAADEEAVTEPLATESKDEPAEHPEFEGPRRRARRERAERRA. Over 1-99 the chain is Cytoplasmic; sequence MTEHNEDPQI…AARGVVRGLK (99 aa). A helical membrane pass occupies residues 100–120; it reads ALLATVVLAVVGIGLGLALYF. Over 121-314 the chain is Extracellular; the sequence is TPAMSAREIV…VSSPDLPTVK (194 aa). The 69-residue stretch at 124 to 192 folds into the POTRA domain; that stretch reads MSAREIVIIG…SALRITIVER (69 aa).

It belongs to the FtsQ/DivIB family. FtsQ subfamily.

It localises to the cell membrane. Functionally, essential cell division protein. The chain is Cell division protein FtsQ from Mycobacterium bovis (strain ATCC BAA-935 / AF2122/97).